Reading from the N-terminus, the 436-residue chain is Serine protease inhibitor A6 (436 aa).

Residues 1-16 (MHLLVYLSLFFALALA) form the signal peptide. The interval 26-60 (KHRHRHEQQGHHDSAKHGHQKDKQQQEQIKNDEGK) is disordered. Residues 32–60 (EQQGHHDSAKHGHQKDKQQQEQIKNDEGK) show a composition bias toward basic and acidic residues. Residues asparagine 260 and asparagine 289 are each glycosylated (N-linked (GlcNAc...) asparagine).

It belongs to the serpin family. As to expression, liver.

It is found in the secreted. The protein localises to the extracellular space. In terms of biological role, not yet known. This Xenopus laevis (African clawed frog) protein is Serine protease inhibitor A6 (serpina6).